Here is a 367-residue protein sequence, read N- to C-terminus: Damage-control phosphatase At2g17340 (367 aa).

Met-1 carries the N-acetylmethionine modification. Mn(2+) contacts are provided by Asp-220, Asn-221, and Asp-256. Residues Glu-318–Arg-322 carry the Subfamily II EGMGR motif motif.

Belongs to the damage-control phosphatase family. Phosphopantetheine phosphatase II subfamily. Multimer. It depends on Mn(2+) as a cofactor. Ni(2+) serves as cofactor.

With respect to regulation, activity is strongly promoted by Co(2+), Ni(2+), Mg(2+), Cu(2+) and Mn(2+). Activity is inhibited by EDTA. In terms of biological role, metal-dependent phosphatase with probable damage-control functions. Shows phosphatase activity against several substrates, including sugar phosphates and p-nitrophenyl phosphate(pNPP). Prefers sugar phosphate substrates, including the extremely potent glycating agents ribose-5-phosphate and erythrose-4-phosphate. The protein is Damage-control phosphatase At2g17340 of Arabidopsis thaliana (Mouse-ear cress).